The following is a 137-amino-acid chain: Nuclear transition protein 2 (137 aa).

Residues 1–21 (MDTKTQSLPNAHTQPHSNSGP) are compositionally biased toward polar residues. The disordered stretch occupies residues 1 to 137 (MDTKTQSLPN…KRRSSGRKYN (137 aa)). 7 residues coordinate Zn(2+): H12, H16, H24, C29, C31, C35, and C38. Residues 22-74 (QSHACNQCSCSHHCQNCSQSCDRSQSCSRSRSSSQSPTGHRSLPGHQSQSLSP) show a composition bias toward low complexity. Positions 78–91 (PRHRKRAMHSHRCP) are enriched in basic residues. The Nuclear localization signal signature appears at 110–118 (GKANKRKGI). The span at 126–137 (KTKRRSSGRKYN) shows a compositional bias: basic residues. S132 bears the Phosphoserine mark.

Belongs to the nuclear transition protein 2 family. In terms of tissue distribution, testis. Expression is restricted to haploid germ cells.

Its subcellular location is the nucleus. The protein localises to the nucleolus. It localises to the chromosome. Functionally, plays a key role in the replacement of histones to protamine in the elongating spermatids of mammals. In condensing spermatids, loaded onto the nucleosomes, where it promotes the recruitment and processing of protamines, which are responsible for histone eviction. The chain is Nuclear transition protein 2 (TNP2) from Sus scrofa (Pig).